A 388-amino-acid polypeptide reads, in one-letter code: P2X purinoceptor 4 (388 aa).

Topologically, residues 1 to 33 (MAGCCAALAAFLFEYDTPRIVLIRSRKVGLMNR) are cytoplasmic. A helical membrane pass occupies residues 34-54 (AVQLLILAYVIGWVFVWEKGY). Residues 55-338 (QETDSVVSSV…KFDIIPTMIN (284 aa)) are Extracellular-facing. Positions 67 and 69 each coordinate ATP. Lys-67 and Lys-69 together coordinate CTP. N-linked (GlcNAc...) asparagine glycans are attached at residues Asn-75 and Asn-110. Cystine bridges form between Cys-116–Cys-165, Cys-126–Cys-149, and Cys-132–Cys-159. N-linked (GlcNAc...) asparagine glycosylation is found at Asn-153 and Asn-184. Thr-186 and Leu-188 together coordinate ATP. Position 186 (Thr-186) interacts with CTP. 2 N-linked (GlcNAc...) asparagine glycosylation sites follow: Asn-199 and Asn-208. Intrachain disulfides connect Cys-217-Cys-227 and Cys-261-Cys-270. 3 residues coordinate ATP: Asn-293, Arg-295, and Lys-313. 3 residues coordinate CTP: Asn-293, Arg-295, and Lys-313. A helical membrane pass occupies residues 339 to 359 (IGSGLALLGMATVLCDIIVLY). Over 360–388 (CMKKRLYYREKKYKYVEDYEQGLASELDQ) the chain is Cytoplasmic.

The protein belongs to the P2X receptor family. Functional P2RXs are organized as homomeric and heteromeric trimers. Forms heterotrimer with P2RX1. Interacts with P2RX7 (via C-terminus); this interaction is functional only in the presence of ATP. Forms heterotrimer with P2RX4; functional differences between homomeric P2RX4 and P2RX4/6 heterotrimer are minor. Interacts with AP1M2.

It localises to the cell membrane. It is found in the lysosome membrane. The catalysed reaction is K(+)(in) = K(+)(out). The enzyme catalyses Na(+)(in) = Na(+)(out). It carries out the reaction Ca(2+)(in) = Ca(2+)(out). Its activity is regulated as follows. Activated by ATP. pH-dependent and inhibited by acidic pH. In terms of biological role, ATP-gated nonselective transmembrane cation channel permeable to potassium, sodium and calcium. CTP, but not GTP or UTP, functions as a weak affinity agonist for P2RX4. Activated by extracellularly released ATP, it plays multiple role in immunity and central nervous system physiology. Plays a key role in initial steps of T-cell activation and Ca(2+) microdomain formation. Also participates in basal T-cell activity without TCR/CD3 stimulation. Promotes the differentiation and activation of Th17 cells via expression of retinoic acid-related orphan receptor C/RORC. Upon activation, drives microglia motility via the PI3K/Akt pathway. Could also function as an ATP-gated cation channel of lysosomal membranes. This is P2X purinoceptor 4 (P2RX4) from Homo sapiens (Human).